A 170-amino-acid polypeptide reads, in one-letter code: Non-specific lipid transfer protein GPI-anchored 5 (170 aa).

An N-terminal signal peptide occupies residues 1–24 (MKMEMGLVFLTVFMAVMSSTMVSA). Intrachain disulfides connect Cys-28–Cys-69, Cys-38–Cys-53, Cys-54–Cys-95, and Cys-67–Cys-105. Asn-45, Asn-84, Asn-124, and Asn-130 each carry an N-linked (GlcNAc...) asparagine glycan. The interval 105–148 (CNTGGGGGGSTSDSPAESPNSSGPGNGSKTVPVGEGDGPPSSDG) is disordered. Ser-146 carries the GPI-anchor amidated serine lipid modification. The propeptide at 147–170 (DGSSIKFSFPLIAFFSAVSYMAIF) is removed in mature form.

This sequence belongs to the plant LTP family. Expressed in seedlings, preferentially in the endodermis of hypocotyls and roots, as well as in anthers, sepals and flower tori.

The protein localises to the cell membrane. In terms of biological role, lipid transfer protein involved in seed and ovule maturation and development, probably by regulating the fatty acids homeostasis during suberin and sporopollenin biosynthesis or deposition. Contributes to pre-invasive defense against some non-host powdery mildew pathogens by preventing the penetration of the epidermal cell wall by the fungal agents (e.g. Blumeria graminis f. sp. hordei (Bgh)). This is Non-specific lipid transfer protein GPI-anchored 5 from Arabidopsis thaliana (Mouse-ear cress).